Reading from the N-terminus, the 255-residue chain is Hemin import ATP-binding protein HmuV (255 aa).

The region spanning 2 to 238 is the ABC transporter domain; that stretch reads LDVEGLHLKR…AALNAVFGID (237 aa). ATP is bound at residue 34–41; that stretch reads GPNGAGKS.

This sequence belongs to the ABC transporter superfamily. Heme (hemin) importer (TC 3.A.1.14.5) family. In terms of assembly, the complex is composed of two ATP-binding proteins (HmuV), two transmembrane proteins (HmuU) and a solute-binding protein (HmuT).

It is found in the cell inner membrane. In terms of biological role, part of the ABC transporter complex HmuTUV involved in hemin import. Responsible for energy coupling to the transport system. The protein is Hemin import ATP-binding protein HmuV of Pseudomonas entomophila (strain L48).